A 466-amino-acid polypeptide reads, in one-letter code: Asparagine--tRNA ligase (466 aa).

It belongs to the class-II aminoacyl-tRNA synthetase family. In terms of assembly, homodimer.

The protein localises to the cytoplasm. The catalysed reaction is tRNA(Asn) + L-asparagine + ATP = L-asparaginyl-tRNA(Asn) + AMP + diphosphate + H(+). This Aeromonas hydrophila subsp. hydrophila (strain ATCC 7966 / DSM 30187 / BCRC 13018 / CCUG 14551 / JCM 1027 / KCTC 2358 / NCIMB 9240 / NCTC 8049) protein is Asparagine--tRNA ligase.